A 917-amino-acid chain; its full sequence is Phosphoenolpyruvate carboxylase (917 aa).

Residues H145 and K578 contribute to the active site.

The protein belongs to the PEPCase type 1 family. The cofactor is Mg(2+).

It carries out the reaction oxaloacetate + phosphate = phosphoenolpyruvate + hydrogencarbonate. In terms of biological role, forms oxaloacetate, a four-carbon dicarboxylic acid source for the tricarboxylic acid cycle. The sequence is that of Phosphoenolpyruvate carboxylase from Azoarcus sp. (strain BH72).